Consider the following 34-residue polypeptide: Photosystem II reaction center protein M (34 aa).

The helical transmembrane segment at 5-25 (ILAFIATALFILVPTAFLLII) threads the bilayer.

This sequence belongs to the PsbM family. As to quaternary structure, PSII is composed of 1 copy each of membrane proteins PsbA, PsbB, PsbC, PsbD, PsbE, PsbF, PsbH, PsbI, PsbJ, PsbK, PsbL, PsbM, PsbT, PsbX, PsbY, PsbZ, Psb30/Ycf12, at least 3 peripheral proteins of the oxygen-evolving complex and a large number of cofactors. It forms dimeric complexes.

The protein resides in the plastid. Its subcellular location is the chloroplast thylakoid membrane. In terms of biological role, one of the components of the core complex of photosystem II (PSII). PSII is a light-driven water:plastoquinone oxidoreductase that uses light energy to abstract electrons from H(2)O, generating O(2) and a proton gradient subsequently used for ATP formation. It consists of a core antenna complex that captures photons, and an electron transfer chain that converts photonic excitation into a charge separation. This subunit is found at the monomer-monomer interface. This Buxus microphylla (Littleleaf boxwood) protein is Photosystem II reaction center protein M.